Consider the following 328-residue polypeptide: tRNA uridine(34) hydroxylase (328 aa).

The Rhodanese domain occupies Leu130–Glu224. Cys184 (cysteine persulfide intermediate) is an active-site residue.

This sequence belongs to the TrhO family.

It carries out the reaction uridine(34) in tRNA + AH2 + O2 = 5-hydroxyuridine(34) in tRNA + A + H2O. In terms of biological role, catalyzes oxygen-dependent 5-hydroxyuridine (ho5U) modification at position 34 in tRNAs. This is tRNA uridine(34) hydroxylase from Streptococcus gordonii (strain Challis / ATCC 35105 / BCRC 15272 / CH1 / DL1 / V288).